We begin with the raw amino-acid sequence, 62 residues long: Large ribosomal subunit protein uL30 (62 aa).

The protein belongs to the universal ribosomal protein uL30 family. In terms of assembly, part of the 50S ribosomal subunit.

This Heliobacterium modesticaldum (strain ATCC 51547 / Ice1) protein is Large ribosomal subunit protein uL30.